We begin with the raw amino-acid sequence, 205 residues long: S-crystallin SL11 (205 aa).

Residues 2 to 80 form the GST N-terminal domain; sequence PSYTLYYFNG…YLAREFGFYG (79 aa). One can recognise a GST C-terminal domain in the interval 82 to 205; it reads NNMDMFKVDC…YIKKRNNTAF (124 aa).

It belongs to the GST superfamily. Lens.

Functionally, S-crystallins are structural components of squids and octopi eye lens. Contains relatively little if any GST activity. In Nototodarus sloanii (Wellington flying squid), this protein is S-crystallin SL11.